The sequence spans 640 residues: Probable potassium transport system protein Kup (640 aa).

A run of 12 helical transmembrane segments spans residues 26 to 46, 69 to 89, 117 to 137, 155 to 175, 186 to 206, 224 to 244, 265 to 285, 297 to 317, 355 to 375, 384 to 404, 415 to 435, and 437 to 457; these read IAGL…TSPL, ILSL…VLFI, AWVL…DGMI, PAFR…LFVI, IFGP…IAGI, FFAD…LAIT, WFLV…ALIL, LLVP…ATII, IYVP…VVGF, AYGI…FVVV, AGLF…ATTV, and ILAG…LLTT.

This sequence belongs to the HAK/KUP transporter (TC 2.A.72) family.

It localises to the cell inner membrane. The enzyme catalyses K(+)(in) + H(+)(in) = K(+)(out) + H(+)(out). Its function is as follows. Transport of potassium into the cell. Likely operates as a K(+):H(+) symporter. This Aromatoleum aromaticum (strain DSM 19018 / LMG 30748 / EbN1) (Azoarcus sp. (strain EbN1)) protein is Probable potassium transport system protein Kup.